The chain runs to 237 residues: tRNA (guanine-N(7)-)-methyltransferase (237 aa).

Positions 35, 60, 87, and 113 each coordinate S-adenosyl-L-methionine. The active site involves Asp113. Residues Lys117 and Asp149 each coordinate substrate.

Belongs to the class I-like SAM-binding methyltransferase superfamily. TrmB family.

It catalyses the reaction guanosine(46) in tRNA + S-adenosyl-L-methionine = N(7)-methylguanosine(46) in tRNA + S-adenosyl-L-homocysteine. It participates in tRNA modification; N(7)-methylguanine-tRNA biosynthesis. Functionally, catalyzes the formation of N(7)-methylguanine at position 46 (m7G46) in tRNA. The protein is tRNA (guanine-N(7)-)-methyltransferase of Synechococcus sp. (strain CC9311).